The chain runs to 92 residues: Small ribosomal subunit protein uS19 (92 aa).

It belongs to the universal ribosomal protein uS19 family.

Functionally, protein S19 forms a complex with S13 that binds strongly to the 16S ribosomal RNA. The sequence is that of Small ribosomal subunit protein uS19 from Borrelia hermsii (strain HS1 / DAH).